The primary structure comprises 422 residues: Validoxylamine A glucosyltransferase (422 aa).

The protein belongs to the glycosyltransferase 2 family. Mn(2+) is required as a cofactor.

It carries out the reaction validoxylamine A + UDP-alpha-D-glucose = validamycin A + UDP + H(+). Involved in the biosynthesis of the antifungal agent validamycin A. Catalyzes the final attachment of glucose from UDP-alpha-D-glucose to validoxylamine A to yield validamycin A. UDP-glucose is the most efficient glycosyl donor, whereas GDP-glucose and ADP-glucose are much less efficient. ValG also utilizes UDP-galactose as substrate to produce the new validamycin analog, 4''-epi-validamycin A. The protein is Validoxylamine A glucosyltransferase of Streptomyces hygroscopicus subsp. jinggangensis (strain 5008).